Consider the following 293-residue polypeptide: Formamidopyrimidine-DNA glycosylase (293 aa).

Pro2 serves as the catalytic Schiff-base intermediate with DNA. The Proton donor role is filled by Glu3. Lys60 acts as the Proton donor; for beta-elimination activity in catalysis. 3 residues coordinate DNA: His110, Arg129, and Lys174. The FPG-type zinc finger occupies 259-293 (NVYRRTGKKCHACKNLIERQKISGRSTHWCRKCQK). Residue Arg283 is the Proton donor; for delta-elimination activity of the active site.

Belongs to the FPG family. In terms of assembly, monomer. Zn(2+) serves as cofactor.

The enzyme catalyses Hydrolysis of DNA containing ring-opened 7-methylguanine residues, releasing 2,6-diamino-4-hydroxy-5-(N-methyl)formamidopyrimidine.. It catalyses the reaction 2'-deoxyribonucleotide-(2'-deoxyribose 5'-phosphate)-2'-deoxyribonucleotide-DNA = a 3'-end 2'-deoxyribonucleotide-(2,3-dehydro-2,3-deoxyribose 5'-phosphate)-DNA + a 5'-end 5'-phospho-2'-deoxyribonucleoside-DNA + H(+). Functionally, involved in base excision repair of DNA damaged by oxidation or by mutagenic agents. Acts as a DNA glycosylase that recognizes and removes damaged bases. Has a preference for oxidized purines, such as 7,8-dihydro-8-oxoguanine (8-oxoG). Has AP (apurinic/apyrimidinic) lyase activity and introduces nicks in the DNA strand. Cleaves the DNA backbone by beta-delta elimination to generate a single-strand break at the site of the removed base with both 3'- and 5'-phosphates. This is Formamidopyrimidine-DNA glycosylase from Prochlorococcus marinus (strain MIT 9515).